The primary structure comprises 289 residues: Protein shisa-2 homolog (289 aa).

The N-terminal stretch at 1–27 is a signal peptide; sequence MWAGCHPDAASLLRLLLAALLAAGALA. The Extracellular segment spans residues 28–104; the sequence is SGEYCHGWLD…RADKDGPDGS (77 aa). Residues 81-102 form a disordered region; the sequence is GCDNDRQQGAGEPGRADKDGPD. The helical transmembrane segment at 105–125 threads the bilayer; sequence AVPIYVPFLIVGSVFVAFIVL. The Cytoplasmic segment spans residues 126–289; sequence GSLVAACCCR…EQKMYPAVTV (164 aa). A disordered region spans residues 162–198; sequence PSASTSRGSSSRQSSTAASSSSSANSGARAPPTRSQT. Positions 163–191 are enriched in low complexity; sequence SASTSRGSSSRQSSTAASSSSSANSGARA.

The protein belongs to the shisa family.

Its subcellular location is the endoplasmic reticulum membrane. In terms of biological role, plays an essential role in the maturation of presomitic mesoderm cells by individual attenuation of both FGF and WNT signaling. This Bos taurus (Bovine) protein is Protein shisa-2 homolog (SHISA2).